The following is an 81-amino-acid chain: Conotoxin Vc6.7 (81 aa).

Residues 1–19 (MEKLTILLLVAAVLMSIQA) form the signal peptide. Residues 20-44 (VNQEKHQRAKMNLLSKRKPPAERWW) constitute a propeptide that is removed on maturation. 3 cysteine pairs are disulfide-bonded: Cys49-Cys63, Cys56-Cys67, and Cys62-Cys72.

Belongs to the conotoxin O2 superfamily. Expressed by the venom duct.

It is found in the secreted. In terms of biological role, inhibits voltage-gated ion channels. The chain is Conotoxin Vc6.7 from Conus victoriae (Queen Victoria cone).